The primary structure comprises 601 residues: Casbene synthase, chloroplastic (601 aa).

A chloroplast-targeting transit peptide spans 1 to 56 (MALPSAAMQSNPEKLNLFHRLSSLPTTSLEYGNNRFPFFSSSAKSHFKKPTQACLS). The Mg(2+) site is built by aspartate 355, aspartate 359, asparagine 499, serine 503, and glutamate 507. Positions 355–359 (DDTID) match the DDXXD motif motif.

The protein belongs to the terpene synthase family. It depends on Mg(2+) as a cofactor.

The protein resides in the plastid. The protein localises to the chloroplast. It carries out the reaction (2E,6E,10E)-geranylgeranyl diphosphate = casbene + diphosphate. In terms of biological role, catalyzes the cyclization of geranylgeranyl diphosphate to casbene, a diterpene phytoalexin with antibacterial and antifungal activity. In Ricinus communis (Castor bean), this protein is Casbene synthase, chloroplastic.